The sequence spans 429 residues: Adenylosuccinate synthetase (429 aa).

Residues 12-18 (GDEGKGK) and 40-42 (GHT) contribute to the GTP site. Residue D13 is the Proton acceptor of the active site. D13 and G40 together coordinate Mg(2+). IMP contacts are provided by residues 13-16 (DEGK), 38-41 (NAGH), T128, R142, Q223, T238, and R302. The Proton donor role is filled by H41. 298–304 (TVTGRPR) serves as a coordination point for substrate. Residues R304, 330-332 (LLD), and 412-414 (SVG) each bind GTP.

This sequence belongs to the adenylosuccinate synthetase family. Homodimer. Mg(2+) is required as a cofactor.

It localises to the cytoplasm. It catalyses the reaction IMP + L-aspartate + GTP = N(6)-(1,2-dicarboxyethyl)-AMP + GDP + phosphate + 2 H(+). It participates in purine metabolism; AMP biosynthesis via de novo pathway; AMP from IMP: step 1/2. Functionally, plays an important role in the de novo pathway of purine nucleotide biosynthesis. Catalyzes the first committed step in the biosynthesis of AMP from IMP. The polypeptide is Adenylosuccinate synthetase (Lactobacillus helveticus (strain DPC 4571)).